The following is a 146-amino-acid chain: Hemoglobin subunit beta (146 aa).

V1 carries the N-acetylvaline modification. Residues 2-146 (ELTAEEKAAV…VANALAHKYH (145 aa)) enclose the Globin domain. S44 bears the Phosphoserine mark. K59 is subject to N6-acetyllysine. H63 lines the heme b pocket. K82 bears the N6-acetyllysine mark. H92 is a binding site for heme b. At C93 the chain carries S-nitrosocysteine. Residue K144 is modified to N6-acetyllysine.

Belongs to the globin family. In terms of assembly, heterotetramer of two alpha chains and two beta chains. As to expression, red blood cells.

Involved in oxygen transport from the lung to the various peripheral tissues. The sequence is that of Hemoglobin subunit beta (HBB) from Ceratotherium simum (White rhinoceros).